Consider the following 447-residue polypeptide: Protein mab-21-like 4 (447 aa).

This chain is Protein mab-21-like 4, found in Homo sapiens (Human).